The following is a 370-amino-acid chain: L-lactate oxidase (370 aa).

An FMN hydroxy acid dehydrogenase domain is found at 8-367 (DPDGMPVTLS…TPDLLTGFSG (360 aa)). Residue Tyr34 participates in pyruvate binding. Residues 87-89 (PMA), Ser116, and Gln136 contribute to the FMN site. Pyruvate is bound at residue Tyr138. Thr164 lines the FMN pocket. Pyruvate is bound at residue Arg173. FMN is bound by residues Lys238 and Ser260. Pyruvate contacts are provided by His262 and Arg265. The Proton acceptor role is filled by His262. Residues 293–297 (DGGIR) and Arg317 each bind FMN.

The protein belongs to the FMN-dependent alpha-hydroxy acid dehydrogenase family. Homotetramer. FMN is required as a cofactor.

The enzyme catalyses (S)-lactate + O2 = pyruvate + H2O2. It catalyses the reaction a (2S)-2-hydroxycarboxylate + O2 = a 2-oxocarboxylate + H2O2. The catalysed reaction is glycolate + O2 = glyoxylate + H2O2. It carries out the reaction 2-hydroxyoctadecanoate + O2 = 2-oxooctadecanoate + H2O2. Functionally, catalyzes the oxidation of (S)-lactate (L-lactate) to pyruvate, with a reduction of O2 to H2O2. Is also able to use glycolate and to a lesser extent 2-hydroxyoctadecanoate as substrate. This Roseobacter sp. (strain GAI101) protein is L-lactate oxidase.